The sequence spans 353 residues: Basic membrane protein C (353 aa).

The N-terminal stretch at 1 to 16 is a signal peptide; the sequence is MFKRFIFITLSLLVFA. Cys-17 carries N-palmitoyl cysteine lipidation. Cys-17 carries the S-diacylglycerol cysteine lipid modification.

It belongs to the BMP lipoprotein family. As to quaternary structure, monomer.

Its subcellular location is the cell inner membrane. Functionally, may be part of an ABC-type nucleoside uptake system involved in the purine salvage pathway. This Borreliella burgdorferi (strain N40) (Borrelia burgdorferi) protein is Basic membrane protein C (bmpC).